The sequence spans 657 residues: Glycogen debranching enzyme (657 aa).

D336 functions as the Nucleophile in the catalytic mechanism. The active-site Proton donor is the E371. Positions 460 to 479 (ANGEENRDGTNNNYSNNHGK) are disordered.

Belongs to the glycosyl hydrolase 13 family.

The catalysed reaction is Hydrolysis of (1-&gt;6)-alpha-D-glucosidic linkages to branches with degrees of polymerization of three or four glucose residues in limit dextrin.. The protein operates within glycan degradation; glycogen degradation. In terms of biological role, removes maltotriose and maltotetraose chains that are attached by 1,6-alpha-linkage to the limit dextrin main chain, generating a debranched limit dextrin. In Escherichia coli O1:K1 / APEC, this protein is Glycogen debranching enzyme.